Reading from the N-terminus, the 108-residue chain is Small ribosomal subunit protein bS18 (108 aa).

The span at 1 to 12 (MSDITKQPANNI) shows a compositional bias: polar residues. The tract at residues 1–33 (MSDITKQPANNISSDDKKEVAKASAKSSVEGAK) is disordered.

Belongs to the bacterial ribosomal protein bS18 family. In terms of assembly, part of the 30S ribosomal subunit. Forms a tight heterodimer with protein bS6.

Binds as a heterodimer with protein bS6 to the central domain of the 16S rRNA, where it helps stabilize the platform of the 30S subunit. This is Small ribosomal subunit protein bS18 from Mycoplasmoides gallisepticum (strain R(low / passage 15 / clone 2)) (Mycoplasma gallisepticum).